A 520-amino-acid chain; its full sequence is Amine oxidase [flavin-containing] B (520 aa).

Ser-2 carries the post-translational modification N-acetylserine. The Cytoplasmic segment spans residues 2-489 (SGKCDVVVVG…TFLERHLPSV (488 aa)). Lys-52 bears the N6-acetyllysine mark. Cys-397 carries the post-translational modification S-8alpha-FAD cysteine. Residues 490-516 (PGLLRLIGLTAIFSATALGVLAHKRGL) form a helical; Anchor for type IV membrane protein membrane-spanning segment. Residues 517–520 (LVRV) lie on the Mitochondrial intermembrane side of the membrane.

The protein belongs to the flavin monoamine oxidase family. In terms of assembly, monomer, homo- or heterodimer (containing two subunits of similar size). Each subunit contains a covalently bound flavin. Enzymatically active as monomer. Requires FAD as cofactor.

The protein resides in the mitochondrion outer membrane. The enzyme catalyses a secondary aliphatic amine + O2 + H2O = a primary amine + an aldehyde + H2O2. The catalysed reaction is (R)-adrenaline + O2 + H2O = (R)-3,4-dihydroxymandelaldehyde + methylamine + H2O2. It catalyses the reaction a primary methyl amine + O2 + H2O = an aldehyde + H2O2 + NH4(+). It carries out the reaction benzylamine + O2 + H2O = benzaldehyde + H2O2 + NH4(+). The enzyme catalyses dopamine + O2 + H2O = 3,4-dihydroxyphenylacetaldehyde + H2O2 + NH4(+). The catalysed reaction is tyramine + O2 + H2O = (4-hydroxyphenyl)acetaldehyde + H2O2 + NH4(+). It catalyses the reaction (R)-noradrenaline + O2 + H2O = (R)-3,4-dihydroxymandelaldehyde + H2O2 + NH4(+). It carries out the reaction 2-phenylethylamine + O2 + H2O = 2-phenylacetaldehyde + H2O2 + NH4(+). The enzyme catalyses N-acetylputrescine + O2 + H2O = 4-acetamidobutanal + H2O2 + NH4(+). Functionally, catalyzes the oxidative deamination of primary and some secondary amines such as neurotransmitters, and exogenous amines including the tertiary amine, neurotoxin 1-methyl-4-phenyl-1,2,3,6-tetrahydropyridine (MPTP), with concomitant reduction of oxygen to hydrogen peroxide and participates in the metabolism of neuroactive and vasoactive amines in the central nervous system and peripheral tissues. Preferentially degrades benzylamine and phenylethylamine. In Canis lupus familiaris (Dog), this protein is Amine oxidase [flavin-containing] B.